Reading from the N-terminus, the 192-residue chain is Adenylate kinase (192 aa).

10–15 (GAGKGT) contacts ATP. The NMP stretch occupies residues 30-56 (GTGGMLRALEPESGEQIHLRIDRGHFA). AMP is bound by residues Thr31, Arg36, 82–85 (GFPR), and Gln89. The LID stretch occupies residues 123–133 (KRGETENRADD). Arg124 is an ATP binding site. Residues Arg130 and Arg141 each contribute to the AMP site. Asp169 lines the ATP pocket.

It belongs to the adenylate kinase family. As to quaternary structure, monomer.

It is found in the cytoplasm. The catalysed reaction is AMP + ATP = 2 ADP. The protein operates within purine metabolism; AMP biosynthesis via salvage pathway; AMP from ADP: step 1/1. Its function is as follows. Catalyzes the reversible transfer of the terminal phosphate group between ATP and AMP. Plays an important role in cellular energy homeostasis and in adenine nucleotide metabolism. This chain is Adenylate kinase, found in Rhodopirellula baltica (strain DSM 10527 / NCIMB 13988 / SH1).